We begin with the raw amino-acid sequence, 317 residues long: Transaldolase (317 aa).

The active-site Schiff-base intermediate with substrate is the K126.

It belongs to the transaldolase family. Type 1 subfamily. As to quaternary structure, homodimer.

It is found in the cytoplasm. The enzyme catalyses D-sedoheptulose 7-phosphate + D-glyceraldehyde 3-phosphate = D-erythrose 4-phosphate + beta-D-fructose 6-phosphate. The protein operates within carbohydrate degradation; pentose phosphate pathway; D-glyceraldehyde 3-phosphate and beta-D-fructose 6-phosphate from D-ribose 5-phosphate and D-xylulose 5-phosphate (non-oxidative stage): step 2/3. Transaldolase is important for the balance of metabolites in the pentose-phosphate pathway. In Burkholderia multivorans (strain ATCC 17616 / 249), this protein is Transaldolase.